We begin with the raw amino-acid sequence, 564 residues long: Mercuric reductase (564 aa).

The region spanning 1-65 (MSTLKITGMT…AVAGLGYRAT (65 aa)) is the HMA domain. Residues Cys11 and Cys14 each contribute to the a metal cation site. The FAD site is built by Ala109, Gly129, and Thr134. A disulfide bridge connects residues Cys135 and Cys140. FAD-binding residues include Lys144, Ala210, Asp406, and Val414. 2 residues coordinate Hg(2+): Cys561 and Cys562.

This sequence belongs to the class-I pyridine nucleotide-disulfide oxidoreductase family. In terms of assembly, homodimer. Requires FAD as cofactor.

It catalyses the reaction Hg + NADP(+) + H(+) = Hg(2+) + NADPH. Its function is as follows. Resistance to Hg(2+) in bacteria appears to be governed by a specialized system which includes mercuric reductase. MerA protein is responsible for volatilizing mercury as Hg(0). This is Mercuric reductase (merA) from Shigella flexneri.